We begin with the raw amino-acid sequence, 363 residues long: Anhydro-N-acetylmuramic acid kinase (363 aa).

Residue 9 to 16 (GTSLDGID) coordinates ATP.

It belongs to the anhydro-N-acetylmuramic acid kinase family.

It carries out the reaction 1,6-anhydro-N-acetyl-beta-muramate + ATP + H2O = N-acetyl-D-muramate 6-phosphate + ADP + H(+). Its pathway is amino-sugar metabolism; 1,6-anhydro-N-acetylmuramate degradation. It functions in the pathway cell wall biogenesis; peptidoglycan recycling. Its function is as follows. Catalyzes the specific phosphorylation of 1,6-anhydro-N-acetylmuramic acid (anhMurNAc) with the simultaneous cleavage of the 1,6-anhydro ring, generating MurNAc-6-P. Is required for the utilization of anhMurNAc either imported from the medium or derived from its own cell wall murein, and thus plays a role in cell wall recycling. The polypeptide is Anhydro-N-acetylmuramic acid kinase (Nitrosomonas europaea (strain ATCC 19718 / CIP 103999 / KCTC 2705 / NBRC 14298)).